The following is a 259-amino-acid chain: Ribosomal RNA small subunit methyltransferase J (259 aa).

S-adenosyl-L-methionine-binding positions include 101 to 102 (RD), 117 to 118 (ER), 153 to 154 (SS), and D176.

The protein belongs to the methyltransferase superfamily. RsmJ family.

It localises to the cytoplasm. The catalysed reaction is guanosine(1516) in 16S rRNA + S-adenosyl-L-methionine = N(2)-methylguanosine(1516) in 16S rRNA + S-adenosyl-L-homocysteine + H(+). Its function is as follows. Specifically methylates the guanosine in position 1516 of 16S rRNA. The chain is Ribosomal RNA small subunit methyltransferase J from Vibrio vulnificus (strain YJ016).